Reading from the N-terminus, the 218-residue chain is Thiopurine S-methyltransferase (218 aa).

4 residues coordinate S-adenosyl-L-methionine: Trp10, Leu45, Glu66, and Arg123.

Belongs to the class I-like SAM-binding methyltransferase superfamily. TPMT family.

The protein localises to the cytoplasm. It catalyses the reaction S-adenosyl-L-methionine + a thiopurine = S-adenosyl-L-homocysteine + a thiopurine S-methylether.. This Xanthomonas axonopodis pv. citri (strain 306) protein is Thiopurine S-methyltransferase.